Here is a 469-residue protein sequence, read N- to C-terminus: Glutamate--tRNA ligase (469 aa).

Positions 9 to 19 (PSPTGFLHVGG) match the 'HIGH' region motif. Residues Cys-98, Cys-100, Cys-125, and Asp-127 each coordinate Zn(2+). The short motif at 236 to 240 (KLSKR) is the 'KMSKS' region element. Residue Lys-239 participates in ATP binding.

Belongs to the class-I aminoacyl-tRNA synthetase family. Glutamate--tRNA ligase type 1 subfamily. As to quaternary structure, monomer. The cofactor is Zn(2+).

It is found in the cytoplasm. The catalysed reaction is tRNA(Glu) + L-glutamate + ATP = L-glutamyl-tRNA(Glu) + AMP + diphosphate. Catalyzes the attachment of glutamate to tRNA(Glu) in a two-step reaction: glutamate is first activated by ATP to form Glu-AMP and then transferred to the acceptor end of tRNA(Glu). The chain is Glutamate--tRNA ligase from Shewanella baltica (strain OS155 / ATCC BAA-1091).